A 430-amino-acid chain; its full sequence is Nacrein-like protein P2 (430 aa).

Asn-27 is a glycosylation site (N-linked (GlcNAc...) asparagine). One can recognise an Alpha-carbonic anhydrase domain in the interval 33-429 (AGFSYDRSIC…KNKVTVYKSF (397 aa)). 3 residues coordinate Zn(2+): His-132, His-134, and His-157. A disordered region spans residues 201-312 (DEPDDEECKR…GENGHKHGCR (112 aa)). Residues 207–219 (ECKRILKGHHPDN) show a composition bias toward basic and acidic residues. The segment covering 220 to 304 (NENGNGDNGN…NNGENGNNGE (85 aa)) has biased composition (low complexity). Tandem repeats lie at residues 225-227 (GDN), 228-230 (GNN), 231-233 (GYN), 234-236 (GDN), 237-239 (GNN), 240-242 (GDN), 243-245 (GNN), 246-248 (GYN), 249-251 (GDN), 252-254 (GNN), 255-257 (GVN), 258-260 (GNN), 261-263 (GYN), 264-266 (GDN), 267-269 (GNN), 270-272 (GDN), 273-275 (GNN), 276-278 (GYN), 279-281 (GDN), 282-284 (GNN), 285-287 (GDN), 288-290 (GNN), 291-293 (GEN), 294-296 (GNN), 297-299 (GEN), 300-301 (GN), and 303-305 (GEN). The segment at 225–305 (GDNGNNGYNG…NGENGNNGEN (81 aa)) is 27 X 3 AA approximate tandem repeats of G-X-N. Position 370-371 (370-371 (TT)) interacts with substrate.

Belongs to the alpha-carbonic anhydrase family. Homooligomer; disulfide-linked. May also be disulfide-linked to insoluble organic matrix. It depends on Zn(2+) as a cofactor. Expressed in the mantle.

The protein localises to the secreted. The protein resides in the extracellular space. Its subcellular location is the extracellular matrix. It carries out the reaction hydrogencarbonate + H(+) = CO2 + H2O. Functionally, acts as a negative regulator for calcification in the shells of mollusks. May function both as a calcium concentrator and as a carbonic anhydrase required for production of carbonate ions, which are assembled to CaCO(3) at mineralization sites. Is important for shell formation in both the calcitic prismatic layer and the aragonitic nacreous layer. Shows inhibitory activity of crystal formation when present in free state but, when attached to the insoluble matrix, may regulate the form and size of aragonite crystal. This is Nacrein-like protein P2 from Mizuhopecten yessoensis (Japanese scallop).